The chain runs to 298 residues: Diphthine methyl ester synthase (298 aa).

S-adenosyl-L-methionine-binding positions include leucine 9, aspartate 85, glycine 88, 113 to 114 (SV), leucine 164, leucine 222, and histidine 247.

The protein belongs to the diphthine synthase family.

It localises to the cytoplasm. It carries out the reaction 2-[(3S)-amino-3-carboxypropyl]-L-histidyl-[translation elongation factor 2] + 4 S-adenosyl-L-methionine = diphthine methyl ester-[translation elongation factor 2] + 4 S-adenosyl-L-homocysteine + 3 H(+). It functions in the pathway protein modification; peptidyl-diphthamide biosynthesis. Functionally, S-adenosyl-L-methionine-dependent methyltransferase that catalyzes four methylations of the modified target histidine residue in translation elongation factor 2 (EF-2), to form an intermediate called diphthine methyl ester. The four successive methylation reactions represent the second step of diphthamide biosynthesis. In Kluyveromyces lactis (strain ATCC 8585 / CBS 2359 / DSM 70799 / NBRC 1267 / NRRL Y-1140 / WM37) (Yeast), this protein is Diphthine methyl ester synthase (DPH5).